The sequence spans 354 residues: MGDWAQLAQSVILGLIFSYLLAKLISIVVTFKEDNLSLTRHPEESQLEIKPEGVDSRRLDSSCGGFGGEADSLVAEQGSSRSDSVAGDDSEEDDDWEGVESTELDEAFSAATLFVTTAAADRLSQKVPSDVQQQLYGLYKIATEGPCTAPQPSALKMTARAKWQAWQKLGAMPPEEAMEKYIEIVTQLYPTWLDGGVKAGSRGGDDAASNSRGTMGPVFSSLVYDEESENELKIDAIHGFAREGEVENLLKSIESGIPVNARDSEGRTPLHWAIDRGHLNIAKVLVDKNADVNAKDNEGQTPLHYAVVCDREAIAEFLVKQNANTAAKDEDGNSPLDLCESDWPWIRDSAKQAD.

Residues Val-11–Phe-31 traverse the membrane as a helical; Signal-anchor segment. The disordered stretch occupies residues Ala-75–Trp-96. The segment covering Ala-86–Trp-96 has biased composition (acidic residues). The ACB domain maps to Leu-104–Asp-194. An acyl-CoA is bound by residues Tyr-136 to Lys-140, Lys-162, and Tyr-181. ANK repeat units lie at residues Glu-265 to Ala-294 and Glu-298 to Ala-327.

This sequence belongs to the ACBP family. In terms of assembly, interacts (via ankyrin repeats) with HIPP26 and the ethylene-responsive element-binding proteins RAP2-3/EBP and RAP2-12. Interacts with CSE. In terms of tissue distribution, mostly expressed in roots and flowers, and, to a lower extent, in stems, pods and leaves (at protein level).

Its subcellular location is the cell membrane. The protein resides in the endoplasmic reticulum membrane. The protein localises to the peroxisome membrane. Functionally, binds medium- and long-chain acyl-CoA esters with very high affinity. Can interact in vitro with palmitoyl-CoA, but not with oleoyl-CoA. Binds to lead ions (Pb). May function as an intracellular carrier of acyl-CoA esters. Required for proper phospholipid and, to a lower extent, galactolipid composition. The sequence is that of Acyl-CoA-binding domain-containing protein 2 (ACBP2) from Arabidopsis thaliana (Mouse-ear cress).